The primary structure comprises 143 residues: Large ribosomal subunit protein uL11 (143 aa).

Belongs to the universal ribosomal protein uL11 family. Part of the ribosomal stalk of the 50S ribosomal subunit. Interacts with L10 and the large rRNA to form the base of the stalk. L10 forms an elongated spine to which L12 dimers bind in a sequential fashion forming a multimeric L10(L12)X complex. One or more lysine residues are methylated.

In terms of biological role, forms part of the ribosomal stalk which helps the ribosome interact with GTP-bound translation factors. The sequence is that of Large ribosomal subunit protein uL11 from Ectopseudomonas mendocina (strain ymp) (Pseudomonas mendocina).